The following is a 379-amino-acid chain: DNA (cytosine-5)-methyltransferase (379 aa).

An SAM-dependent MTase C5-type domain is found at 4-366; the sequence is LRVLEFYSGI…KVLVSPNEEE (363 aa). Cysteine 78 is an active-site residue. Over residues 178–192 the composition is skewed to basic and acidic residues; sequence KKEQDKHNEKVDENK. The segment at 178–205 is disordered; it reads KKEQDKHNEKVDENKLNNNSNNNNEQNK. Low complexity predominate over residues 193–203; it reads LNNNSNNNNEQ.

This sequence belongs to the class I-like SAM-binding methyltransferase superfamily. C5-methyltransferase family.

Its subcellular location is the nucleus. The enzyme catalyses a 2'-deoxycytidine in DNA + S-adenosyl-L-methionine = a 5-methyl-2'-deoxycytidine in DNA + S-adenosyl-L-homocysteine + H(+). In terms of biological role, involved in epigenetic gene silencing. Methylates specific cytosine residues in the retrotransposons DIRS-1 and Skipper. The protein is DNA (cytosine-5)-methyltransferase (dnmA) of Dictyostelium discoideum (Social amoeba).